The following is a 349-amino-acid chain: Very-long-chain 3-oxoacyl-CoA reductase (349 aa).

The chain crosses the membrane as a helical span at residues alanine 29–leucine 49. NADP(+)-binding residues include leucine 74, aspartate 129, aspartate 137, asparagine 156, tyrosine 223, lysine 227, valine 256, and serine 258. Catalysis depends on tyrosine 223, which acts as the Proton donor. Lysine 227 functions as the Lowers pKa of active site Tyr in the catalytic mechanism.

Belongs to the short-chain dehydrogenases/reductases (SDR) family.

Its subcellular location is the endoplasmic reticulum membrane. It carries out the reaction a very-long-chain (3R)-3-hydroxyacyl-CoA + NADP(+) = a very-long-chain 3-oxoacyl-CoA + NADPH + H(+). It participates in lipid metabolism; fatty acid biosynthesis. Component of the microsomal membrane bound fatty acid elongation system, which produces the 26-carbon very long-chain fatty acids (VLCFA) from palmitate. Catalyzes the reduction of the 3-ketoacyl-CoA intermediate that is formed in each cycle of fatty acid elongation. VLCFAs serve as precursors for ceramide and sphingolipids. The sequence is that of Very-long-chain 3-oxoacyl-CoA reductase from Coccidioides immitis (strain RS) (Valley fever fungus).